We begin with the raw amino-acid sequence, 198 residues long: NADH-quinone oxidoreductase subunit C (198 aa).

It belongs to the complex I 30 kDa subunit family. In terms of assembly, NDH-1 is composed of 14 different subunits. Subunits NuoB, C, D, E, F, and G constitute the peripheral sector of the complex.

It is found in the cell inner membrane. It catalyses the reaction a quinone + NADH + 5 H(+)(in) = a quinol + NAD(+) + 4 H(+)(out). NDH-1 shuttles electrons from NADH, via FMN and iron-sulfur (Fe-S) centers, to quinones in the respiratory chain. The immediate electron acceptor for the enzyme in this species is believed to be ubiquinone. Couples the redox reaction to proton translocation (for every two electrons transferred, four hydrogen ions are translocated across the cytoplasmic membrane), and thus conserves the redox energy in a proton gradient. This chain is NADH-quinone oxidoreductase subunit C, found in Janthinobacterium sp. (strain Marseille) (Minibacterium massiliensis).